The chain runs to 1132 residues: Phosphatidylinositide phosphatase SAC2 (1132 aa).

The SAC domain occupies 167 to 518 (LKMFMDSESF…GDSISRQYAG (352 aa)). Residues 250–269 (ESSDDDKSSPETPPQDSTCV) are disordered. One can recognise a hSac2 domain in the interval 593–760 (RSHQELISQL…KSSKPHEDII (168 aa)). Ser714, Ser827, and Ser830 each carry phosphoserine. Residues 833-872 (TMENPGVMGNKVQGESDGDISSDNDSYHSDEFLTNSKSEE) are disordered. Residues 857–872 (DSYHSDEFLTNSKSEE) show a composition bias toward basic and acidic residues. Residues Ser879, Ser882, Ser908, and Ser911 each carry the phosphoserine modification. 2 stretches are compositionally biased toward polar residues: residues 908-918 (SASSIDVSTHA) and 994-1005 (RVSNEETQSEPM). Disordered stretches follow at residues 908–951 (SASS…HTRT) and 981–1016 (VAQK…SQLN). A Phosphoserine modification is found at Ser1103.

As to quaternary structure, homodimer. Interacts with OCRL and RAB5. Interacts with INPP5B and INPP4A. Interacts with STAT3; the interaction is independent of STAT3 'Tyr-705' phosphorylation status. In terms of tissue distribution, highly expressed in brain and hypothalamus, expressed in lung and pancreas, and detected at low levels in liver and heart (at protein level).

Its subcellular location is the membrane. It is found in the clathrin-coated pit. The protein resides in the early endosome. It localises to the recycling endosome. The enzyme catalyses a myo-inositol phosphate + H2O = myo-inositol + phosphate. Inositol 4-phosphatase which mainly acts on phosphatidylinositol 4-phosphate. May be functionally linked to OCRL, which converts phosphatidylinositol 4,5-bisphosphate to phosphatidylinositol, for a sequential dephosphorylation of phosphatidylinositol 4,5-bisphosphate at the 5 and 4 position of inositol, thus playing an important role in the endocytic recycling. Regulator of TF:TFRC and integrins recycling pathway, is also involved in cell migration mechanisms. Modulates AKT/GSK3B pathway by decreasing AKT and GSK3B phosphorylation. Negatively regulates STAT3 signaling pathway through inhibition of STAT3 phosphorylation and translocation to the nucleus. Functionally important modulator of cardiac myocyte size and of the cardiac response to stress. May play a role as negative regulator of axon regeneration after central nervous system injuries. The polypeptide is Phosphatidylinositide phosphatase SAC2 (Mus musculus (Mouse)).